Reading from the N-terminus, the 674-residue chain is DNA ligase (674 aa).

Residues 34–38 (DFEFD), 83–84 (SL), and E117 each bind NAD(+). K119 functions as the N6-AMP-lysine intermediate in the catalytic mechanism. The NAD(+) site is built by R140, E184, K297, and K321. Residues C415, C418, C433, and C439 each coordinate Zn(2+). Residues 598-674 (LVNTNFEGQS…IDEDEFERML (77 aa)) enclose the BRCT domain.

Belongs to the NAD-dependent DNA ligase family. LigA subfamily. Mg(2+) serves as cofactor. It depends on Mn(2+) as a cofactor.

The enzyme catalyses NAD(+) + (deoxyribonucleotide)n-3'-hydroxyl + 5'-phospho-(deoxyribonucleotide)m = (deoxyribonucleotide)n+m + AMP + beta-nicotinamide D-nucleotide.. In terms of biological role, DNA ligase that catalyzes the formation of phosphodiester linkages between 5'-phosphoryl and 3'-hydroxyl groups in double-stranded DNA using NAD as a coenzyme and as the energy source for the reaction. It is essential for DNA replication and repair of damaged DNA. This Chlorobaculum parvum (strain DSM 263 / NCIMB 8327) (Chlorobium vibrioforme subsp. thiosulfatophilum) protein is DNA ligase.